We begin with the raw amino-acid sequence, 307 residues long: Glycine--tRNA ligase alpha subunit (307 aa).

The protein belongs to the class-II aminoacyl-tRNA synthetase family. In terms of assembly, tetramer of two alpha and two beta subunits.

The protein localises to the cytoplasm. The catalysed reaction is tRNA(Gly) + glycine + ATP = glycyl-tRNA(Gly) + AMP + diphosphate. In Levilactobacillus brevis (strain ATCC 367 / BCRC 12310 / CIP 105137 / JCM 1170 / LMG 11437 / NCIMB 947 / NCTC 947) (Lactobacillus brevis), this protein is Glycine--tRNA ligase alpha subunit.